The following is a 215-amino-acid chain: MSKFRSLADIRRDYGELQLSEESAENDPISQFKLWFDDVLLNEKNDPTAMVLSTVDEKGYPDSRVVLLKGLENGNFIFYTNYQSAKAMQIQKNPYAALNFYWPQMARQVRVRGRVKKISSEQSDAYFSSRPLKSQFSAIVSPQSQEILDRISLEDALNQLIEEYGQKPVVRPENWGGYMIIPDEIEFWQGRDNRLHDRIHYYRHGHEWTHRRLAP.

Substrate contacts are provided by residues 11-14 (RRDY) and Lys-69. Residues 64 to 69 (RVVLLK), 79 to 80 (YT), Lys-86, and Gln-108 each bind FMN. Substrate-binding residues include Tyr-126, Arg-130, and Ser-134. Residues 143-144 (QS) and Trp-188 each bind FMN. 194–196 (RLH) is a binding site for substrate. Arg-198 lines the FMN pocket.

The protein belongs to the pyridoxamine 5'-phosphate oxidase family. As to quaternary structure, homodimer. FMN serves as cofactor.

The catalysed reaction is pyridoxamine 5'-phosphate + O2 + H2O = pyridoxal 5'-phosphate + H2O2 + NH4(+). The enzyme catalyses pyridoxine 5'-phosphate + O2 = pyridoxal 5'-phosphate + H2O2. The protein operates within cofactor metabolism; pyridoxal 5'-phosphate salvage; pyridoxal 5'-phosphate from pyridoxamine 5'-phosphate: step 1/1. It participates in cofactor metabolism; pyridoxal 5'-phosphate salvage; pyridoxal 5'-phosphate from pyridoxine 5'-phosphate: step 1/1. Its function is as follows. Catalyzes the oxidation of either pyridoxine 5'-phosphate (PNP) or pyridoxamine 5'-phosphate (PMP) into pyridoxal 5'-phosphate (PLP). The protein is Pyridoxine/pyridoxamine 5'-phosphate oxidase of Legionella pneumophila (strain Paris).